We begin with the raw amino-acid sequence, 274 residues long: MNRTAIEQAAQFLKEKFPTSPQIGLILGSGLGVLADEIEQAIKIPYSDIPNFPVSTVEGHAGQLVYGQLEGATVVVMQGRFHYYEGYSFDKVTFPVRVMKALGVEQLIVTNAAGGVNESFEPGDLMIISDHINNMGGNPLIGPNDSALGVRFPDMSEAYSKRLRQLAKDVANDIGLRVREGVYVANTGPAYETPAEIRMIRVMGGDAVGMSTVPEVIVARHAGMEVLGISCISNMAAGILDQPLTHDEVIETTEKVKADFLRFVKAIVRNMAKN.

Phosphate contacts are provided by residues serine 29, histidine 60, 80 to 82 (RFH), and alanine 112. The residue at position 29 (serine 29) is a Phosphoserine. An a purine D-ribonucleoside-binding site is contributed by glutamate 192. Residue serine 211 coordinates phosphate. Position 234 (asparagine 234) interacts with a purine D-ribonucleoside.

It belongs to the PNP/MTAP phosphorylase family. As to quaternary structure, homotrimer.

The enzyme catalyses a purine D-ribonucleoside + phosphate = a purine nucleobase + alpha-D-ribose 1-phosphate. It catalyses the reaction a purine 2'-deoxy-D-ribonucleoside + phosphate = a purine nucleobase + 2-deoxy-alpha-D-ribose 1-phosphate. It participates in purine metabolism; purine nucleoside salvage. The purine nucleoside phosphorylases catalyze the phosphorolytic breakdown of the N-glycosidic bond in the beta-(deoxy)ribonucleoside molecules, with the formation of the corresponding free purine bases and pentose-1-phosphate. Cleaves guanosine, inosine, 2'-deoxyguanosine and 2'-deoxyinosine. The chain is Purine nucleoside phosphorylase 1 (punA) from Geobacillus stearothermophilus (Bacillus stearothermophilus).